The primary structure comprises 267 residues: Aliphatic sulfonates import ATP-binding protein SsuB 1 (267 aa).

Residues 35-249 enclose the ABC transporter domain; it reads VRVRGLRRVF…RRADPAFDRL (215 aa). 67–74 lines the ATP pocket; it reads GRSGSGKS.

Belongs to the ABC transporter superfamily. Aliphatic sulfonates importer (TC 3.A.1.17.2) family. The complex is composed of two ATP-binding proteins (SsuB), two transmembrane proteins (SsuC) and a solute-binding protein (SsuA).

The protein resides in the cell membrane. It catalyses the reaction ATP + H2O + aliphatic sulfonate-[sulfonate-binding protein]Side 1 = ADP + phosphate + aliphatic sulfonateSide 2 + [sulfonate-binding protein]Side 1.. Its function is as follows. Part of the ABC transporter complex SsuABC involved in aliphatic sulfonates import. Responsible for energy coupling to the transport system. The polypeptide is Aliphatic sulfonates import ATP-binding protein SsuB 1 (Frankia alni (strain DSM 45986 / CECT 9034 / ACN14a)).